The sequence spans 697 residues: ATP-dependent zinc metalloprotease FtsH (697 aa).

A disordered region spans residues 1-23 (MSQNERDSLELERKNTPPDGPRL). At 1–29 (MSQNERDSLELERKNTPPDGPRLPERRPR) the chain is on the cytoplasmic side. The helical transmembrane segment at 30–50 (FSVWIYLAIFLALLVHFFLFW) threads the bilayer. Residues 51 to 158 (TGTDTSTIEY…QFTARIEENW (108 aa)) lie on the Periplasmic side of the membrane. The helical transmembrane segment at 159-179 (FGGLLTWIFPLILIVALWVFL) threads the bilayer. At 180-697 (LRRMSPSSQV…TERPESSSAP (518 aa)) the chain is on the cytoplasmic side. 251–258 (GPPGTGKT) is a binding site for ATP. Zn(2+) is bound at residue histidine 474. The active site involves glutamate 475. 2 residues coordinate Zn(2+): histidine 478 and aspartate 550. The disordered stretch occupies residues 649–697 (GPRPYGDYPSPNGKDVEELKDLQKGEPTSSSAVEAPAPQTERPESSSAP). The segment covering 662–672 (KDVEELKDLQK) has biased composition (basic and acidic residues).

In the central section; belongs to the AAA ATPase family. It in the C-terminal section; belongs to the peptidase M41 family. In terms of assembly, homohexamer. Zn(2+) serves as cofactor.

The protein localises to the cell inner membrane. Acts as a processive, ATP-dependent zinc metallopeptidase for both cytoplasmic and membrane proteins. Plays a role in the quality control of integral membrane proteins. The protein is ATP-dependent zinc metalloprotease FtsH of Rhodothermus marinus (strain ATCC 43812 / DSM 4252 / R-10) (Rhodothermus obamensis).